Consider the following 334-residue polypeptide: tRNA methyltransferase 10 homolog A (334 aa).

Disordered regions lie at residues 1–101 (MSLE…SRKR) and 290–334 (PLTE…EQNS). Polar residues predominate over residues 26-40 (HAGNNTPLQENSSAP). Positions 62 to 94 (KQWEDQRELRKQKRKEKRQKRKLERQAQAEHNI) form a coiled coil. Over residues 71–84 (RKQKRKEKRQKRKL) the composition is skewed to basic residues. The segment covering 85 to 98 (ERQAQAEHNIDANS) has biased composition (basic and acidic residues). The region spanning 98–289 (SRKRFRHEVQ…SVLPQRKGAI (192 aa)) is the SAM-dependent MTase TRM10-type domain. Residues 305–317 (QEDGEDSDSDSSI) are compositionally biased toward acidic residues.

It belongs to the class IV-like SAM-binding methyltransferase superfamily. TRM10 family.

It carries out the reaction guanosine(9) in tRNA + S-adenosyl-L-methionine = N(1)-methylguanosine(9) in tRNA + S-adenosyl-L-homocysteine + H(+). S-adenosyl-L-methionine-dependent guanine N(1)-methyltransferase that catalyzes the formation of N(1)-methylguanine at position 9 (m1G9) in tRNAs. Probably not able to catalyze formation of N(1)-methyladenine at position 9 (m1A9) in tRNAs. The polypeptide is tRNA methyltransferase 10 homolog A (trmt10a) (Xenopus tropicalis (Western clawed frog)).